The sequence spans 806 residues: MSNFNQISRRDFVKASSAGAALAVSNLTLPFNVMAKETQRLNENNQERIVWSACTVNCGSRCPLRMHVKDNRITYVETDNTGTETYNLDHQVRACLRGRSMRRRVYNPDRLKYPMKRIGKRGEGKFKRISWDEALTEIADALKRNIKKYGNESIYLNYGTGTLGGTMAKSWPPASTMIARFMNCIGGYLNHYGDYSTAQIAVGLDYTYGGGWALGNGMADIENTKLIVLFGNNPAETRMSGGGLTYCIEQAKARSNAKMIIIDPRYNDTGAGREDEWIPIRPGTDAALVAALAYVMIQENLVDQPFLDKYCVGYDEKTLPTDAPKNGHYKAYILGYGNDGIAKTPEWAAKITGIPAERIIKLAREIGSTKPAFISQGWGPQRRSNGELISRAIAMLPILTGNVGIHGGNTGARESAYSIPFVRMPTLKNPVKASIPMFLWTDAIIRGTEMTALTDGIRGVDKLSSPIKVIWNYASNCLINQHAQINRTHDILQDDTQCEMIITIDNHMTSTAKYSDILLPDCTTSEQMDFALDAFVSNMAYVIFADQVIKPSFECRPIYDMLSDLAEKMGVKEKFTEGRTQEEWLRHIYEQSREKLPELPTFEEFRQQGIFKKVDPNGFKVAYKDFRDNPEAHPLKTPSGKIEIYSSRLAEIAKTWKLAEDDVIHPLPIHAQSFEHYGDPLMEKYPLQLSGFHYKARTHSTYGNVDVLKAANPQEVWMNPIDAEPRNIKNGDMIRIFNDRGEVHINVKITPRIIPGVVALSEGAWYAPDKDRIDHSGCINVLTTQRPSPLAKGNPQHSNLVQVERL.

The segment at residues Met-1–Ala-35 is a signal peptide (tat-type signal). Residues Glu-47 to Asp-109 enclose the 4Fe-4S Mo/W bis-MGD-type domain. [4Fe-4S] cluster contacts are provided by Cys-54, Cys-58, Cys-62, and Cys-95. Residues Leu-163 to Met-167, Ser-196, Glu-236 to Thr-237, Ile-262 to Asp-263, Gly-283 to Asp-285, Trp-378 to Gly-379, Arg-382, Asn-480, Ile-504 to Asp-505, His-693, His-699 to Thr-701, Asn-780, and Gln-796 to His-797 each bind Mo-bis(molybdopterin guanine dinucleotide). The disordered stretch occupies residues Arg-786–Leu-806. A compositionally biased stretch (polar residues) spans Pro-795–Leu-806.

It belongs to the prokaryotic molybdopterin-containing oxidoreductase family. Heterotrimeric enzyme composed of a catalytic heterodimer (DmsAB) and a membrane anchor protein (DmsC). [4Fe-4S] cluster is required as a cofactor. It depends on Mo-bis(molybdopterin guanine dinucleotide) as a cofactor. Post-translationally, predicted to be exported by the Tat system. The position of the signal peptide cleavage has not been experimentally proven.

Its subcellular location is the cell membrane. It carries out the reaction dimethyl sulfide + a menaquinone + H2O = dimethyl sulfoxide + a menaquinol. In terms of biological role, catalyzes the reduction of dimethyl sulfoxide (DMSO) to dimethyl sulfide (DMS). The terminal DMSO reductase can also use various sulfoxides and N-oxide compounds as terminal electron acceptor in addition to DMSO. The chain is Dimethyl sulfoxide reductase DmsA (dmsA) from Haemophilus influenzae (strain ATCC 51907 / DSM 11121 / KW20 / Rd).